Reading from the N-terminus, the 224-residue chain is Large ribosomal subunit protein bL25 (224 aa).

The disordered stretch occupies residues 195-224 (TVEEVDEAAEVDAADVPATEQGTDESKDGE). Residues 197–207 (EEVDEAAEVDA) are compositionally biased toward acidic residues.

This sequence belongs to the bacterial ribosomal protein bL25 family. CTC subfamily. In terms of assembly, part of the 50S ribosomal subunit; part of the 5S rRNA/L5/L18/L25 subcomplex. Contacts the 5S rRNA. Binds to the 5S rRNA independently of L5 and L18.

Functionally, this is one of the proteins that binds to the 5S RNA in the ribosome where it forms part of the central protuberance. The protein is Large ribosomal subunit protein bL25 of Psychrobacter cryohalolentis (strain ATCC BAA-1226 / DSM 17306 / VKM B-2378 / K5).